The chain runs to 796 residues: Protein translocase subunit SecA 2 (796 aa).

ATP contacts are provided by residues Gln-84, 102–106 (GEGKT), and Asp-496.

It belongs to the SecA family. Monomer and homodimer. Part of the essential Sec protein translocation apparatus which comprises SecA, SecYEG and auxiliary proteins SecDF. Other proteins may also be involved.

Its subcellular location is the cell membrane. The protein resides in the cytoplasm. The catalysed reaction is ATP + H2O + cellular proteinSide 1 = ADP + phosphate + cellular proteinSide 2.. Its function is as follows. Part of the Sec protein translocase complex. Interacts with the SecYEG preprotein conducting channel. Has a central role in coupling the hydrolysis of ATP to the transfer of proteins into and across the cell membrane, serving as an ATP-driven molecular motor driving the stepwise translocation of polypeptide chains across the membrane. This chain is Protein translocase subunit SecA 2, found in Staphylococcus epidermidis (strain ATCC 12228 / FDA PCI 1200).